Here is a 66-residue protein sequence, read N- to C-terminus: Hemicalcin (66 aa).

The signal sequence occupies residues 1–21 (MRASLFIVIFVVSFITISCLS). The propeptide occupies 22–33 (TDDEEARWIEKR). Disulfide bonds link Cys-36/Cys-50, Cys-43/Cys-54, and Cys-49/Cys-65. Residues 55 to 57 (KRR) are essential for stimulation of [3H]ryanodine binding to RYR1.

Belongs to the scorpion calcin family. In terms of tissue distribution, expressed by the venom gland.

Its subcellular location is the secreted. In terms of biological role, this toxin stabilizes ryanodine receptor 1 (RyR1) opening in a long-lasting subconductance state (20% and 38% of the full conductance state have been found). It promotes an increase in the opening probability at intermediate concentration. Furthermore, it triggers calcium release from sarcoplasmic vesicles (68 nM are enough to induce a sharp release, and 45% of the total calcium is released after toxin (100 nM) addition) probably by acting as a cell-penetrating peptide (CPP). In addition, it has been shown to dose-dependently stimulate ryanodine binding to RyR1 (EC(50)=6.9-71 nM). It also augments the bell-shaped calcium-[3H]ryanodine binding curve that is maximal at about 10 uM calcium concentration. It binds a different site as ryanodine. It acts synergistically with caffeine. In vivo, intracerebroventricular injection into mice induces neurotoxic symptoms, followed by death. This is Hemicalcin from Hemiscorpius lepturus (Scorpion).